The sequence spans 76 residues: uncharacterized protein (76 aa).

The next 2 helical transmembrane spans lie at 16–33 (FAFT…GAVL) and 45–61 (TMFL…FFCA).

It localises to the cell membrane. This is an uncharacterized protein from Bacillus subtilis (strain 168).